Reading from the N-terminus, the 161-residue chain is Cytidylate kinase (161 aa).

Residue 7–15 coordinates ATP; it reads GLAGTGTTT.

This sequence belongs to the cytidylate kinase family. Type 2 subfamily.

Its subcellular location is the cytoplasm. The enzyme catalyses CMP + ATP = CDP + ADP. It carries out the reaction dCMP + ATP = dCDP + ADP. This chain is Cytidylate kinase (cmk), found in Methanothermobacter thermautotrophicus (strain ATCC 29096 / DSM 1053 / JCM 10044 / NBRC 100330 / Delta H) (Methanobacterium thermoautotrophicum).